The sequence spans 309 residues: Probable cell division protein WhiA (309 aa).

A DNA-binding region (H-T-H motif) is located at residues 275-309 (SLKELGELVPGGPISKSGINHRLRKINQYAEKLRA).

This sequence belongs to the WhiA family.

In terms of biological role, involved in cell division and chromosome segregation. This Pediococcus pentosaceus (strain ATCC 25745 / CCUG 21536 / LMG 10740 / 183-1w) protein is Probable cell division protein WhiA.